Consider the following 234-residue polypeptide: Probable pectate lyase F (234 aa).

An N-terminal signal peptide occupies residues 1-17 (MRSTAAVLSILLPGALA). Asparagine 168 carries an N-linked (GlcNAc...) asparagine glycan.

This sequence belongs to the polysaccharide lyase 3 family. Requires Ca(2+) as cofactor.

It localises to the secreted. It carries out the reaction Eliminative cleavage of (1-&gt;4)-alpha-D-galacturonan to give oligosaccharides with 4-deoxy-alpha-D-galact-4-enuronosyl groups at their non-reducing ends.. Its function is as follows. Pectinolytic enzyme consist of four classes of enzymes: pectin lyase, polygalacturonase, pectin methylesterase and rhamnogalacturonase. Among pectinolytic enzymes, pectin lyase is the most important in depolymerization of pectin, since it cleaves internal glycosidic bonds of highly methylated pectins. Favors pectate, the anion, over pectin, the methyl ester. The protein is Probable pectate lyase F (plyF) of Aspergillus terreus (strain NIH 2624 / FGSC A1156).